Consider the following 294-residue polypeptide: MRFVIVTGLSGAGKTQAIRSLEDLGFFCVDNLPPTLIPKFAEACYQTEGKIKKIALVIDIRGGKFFDDLFESLKYLKEEGYKYEILFLDASDEVLIKRFKESRRKHPLSPDGRILNGISMERNRLREVKDRADNIINTSELATRELREAINEIYGEQDQIENQLVITVLSFGFKYGIPLDSDLVFDVRFLPNPYYIKELKQYSGKDKKVSDYVMSFDVTNKFVNRLEDMLNFLIPNYFKEGKRQLIICIGCTGGRHRSVAIANTIYEGLKSKGHKVNIDHRDINEDIHKGGKKL.

Residue 8–15 participates in ATP binding; it reads GLSGAGKT. Residue 59-62 participates in GTP binding; the sequence is DIRG.

This sequence belongs to the RapZ-like family.

Its function is as follows. Displays ATPase and GTPase activities. This Clostridium botulinum (strain 657 / Type Ba4) protein is Nucleotide-binding protein CLJ_B3680.